The following is a 466-amino-acid chain: Putative proline/betaine transporter (466 aa).

The next 12 membrane-spanning stretches (helical) occupy residues 20–42 (VVATGIGNAMEWFDFGVYAYTTA), 63–83 (FAALAIAFLLRPIGGVVFGII), 91–111 (VVLTSTIILMAFSTLTIGLLP), 116–136 (IGLWAPILLLLARVLQGFSTG), 164–184 (IGTLSGYIAASIMIAVLTFFL), 191–211 (SFGWRIPFLLGLFLGLFGLYL), 239–259 (IIRFYYIDIFVCFVAVVFFNV), 285–305 (VLITCVMAIMIPLALMFGKLA), 313–332 (VFLIGTGGLTLFSIIAFMLL), 337–354 (FVVIVIGIFILGFFLSTY), 377–397 (VTFNISVSIFGGTTPLVATWL), and 405–425 (LAPAYYLTAISVIGFLVITFL).

The protein belongs to the major facilitator superfamily. Metabolite:H+ Symporter (MHS) family (TC 2.A.1.6) family.

It localises to the cell membrane. Its function is as follows. May be a proton symporter involved in the uptake of osmolytes such as proline and glycine betaine. This chain is Putative proline/betaine transporter (proP), found in Staphylococcus aureus (strain MSSA476).